Consider the following 68-residue polypeptide: uncharacterized protein (68 aa).

A disordered region spans residues 1–20 (MYKQKKKNHPFQCKKKKKKK). A helical transmembrane segment spans residues 27-44 (IKLLFNYFLFFNFIITTF).

The protein localises to the membrane. This is an uncharacterized protein from Dictyostelium discoideum (Social amoeba).